Reading from the N-terminus, the 929-residue chain is Valine--tRNA ligase (929 aa).

The 'HIGH' region motif lies at Pro59–His69. Residues Lys557–Ser561 carry the 'KMSKS' region motif. Lys560 serves as a coordination point for ATP. Residues Leu862–Gly929 are a coiled coil.

The protein belongs to the class-I aminoacyl-tRNA synthetase family. ValS type 1 subfamily. In terms of assembly, monomer.

The protein resides in the cytoplasm. The catalysed reaction is tRNA(Val) + L-valine + ATP = L-valyl-tRNA(Val) + AMP + diphosphate. In terms of biological role, catalyzes the attachment of valine to tRNA(Val). As ValRS can inadvertently accommodate and process structurally similar amino acids such as threonine, to avoid such errors, it has a 'posttransfer' editing activity that hydrolyzes mischarged Thr-tRNA(Val) in a tRNA-dependent manner. This chain is Valine--tRNA ligase, found in Prochlorococcus marinus (strain MIT 9313).